Here is an 801-residue protein sequence, read N- to C-terminus: DNA mismatch repair protein MutS (801 aa).

An ATP-binding site is contributed by 590–597 (GPNMSGKS).

The protein belongs to the DNA mismatch repair MutS family.

Its function is as follows. This protein is involved in the repair of mismatches in DNA. It is possible that it carries out the mismatch recognition step. This protein has a weak ATPase activity. This chain is DNA mismatch repair protein MutS, found in Thermotoga neapolitana (strain ATCC 49049 / DSM 4359 / NBRC 107923 / NS-E).